A 571-amino-acid chain; its full sequence is Urease subunit alpha (571 aa).

His138, His140, and Lys221 together coordinate Ni(2+). The residue at position 221 (Lys221) is an N6-carboxylysine. Position 223 (His223) interacts with substrate. Ni(2+) is bound by residues His250 and His276. His324 acts as the Proton donor in catalysis. Asp364 provides a ligand contact to Ni(2+).

This sequence belongs to the metallo-dependent hydrolases superfamily. Urease alpha subunit family. Heterotrimer of UreA (gamma), UreB (beta) and UreC (alpha) subunits. Three heterotrimers associate to form the active enzyme. Requires Ni cation as cofactor. Carboxylation allows a single lysine to coordinate two nickel ions.

Its subcellular location is the cytoplasm. It catalyses the reaction urea + 2 H2O + H(+) = hydrogencarbonate + 2 NH4(+). It participates in nitrogen metabolism; urea degradation; CO(2) and NH(3) from urea (urease route): step 1/1. The chain is Urease subunit alpha from Staphylococcus aureus (strain JH9).